The primary structure comprises 349 residues: MSFNISNAEILNILLEGGNLDELTSSLLMQRWLNDEISDVQTGAFLSALRAKGCTGVELSSMAEELLKVCELPVARPNLYMVDTCGTGGDGANTFNISTAVAFVAASCGAKIAKHGNKSASGKVGSADVLLNLGLNLNCSLKKVISAVNEIGITFLFAPVWHKSLIKLAPLRKALGIRTVFNQLGPLVNPLRPNAQVLGVASEDLLEPMGSALLKMGMNRVIVVHGSGGLDEASLQGDNKLVFVEKGKLRFSKINILDFNHENIPNDKLVVSGSDSNEEILKSVLNGSGQKSHKDVVALNAALVLWAAGIEDDLHKGFNKALFSINQGNPWEKFLLLKTYLSSDDLISP.

5-phospho-alpha-D-ribose 1-diphosphate is bound by residues G86, 89–90 (GD), T94, 96–99 (NIST), 114–122 (KHGNKSASG), and S126. Residue G86 coordinates anthranilate. S98 provides a ligand contact to Mg(2+). N117 serves as a coordination point for anthranilate. Position 172 (R172) interacts with anthranilate. Positions 231 and 232 each coordinate Mg(2+).

This sequence belongs to the anthranilate phosphoribosyltransferase family. As to quaternary structure, homodimer. The cofactor is Mg(2+).

The enzyme catalyses N-(5-phospho-beta-D-ribosyl)anthranilate + diphosphate = 5-phospho-alpha-D-ribose 1-diphosphate + anthranilate. It participates in amino-acid biosynthesis; L-tryptophan biosynthesis; L-tryptophan from chorismate: step 2/5. Functionally, catalyzes the transfer of the phosphoribosyl group of 5-phosphorylribose-1-pyrophosphate (PRPP) to anthranilate to yield N-(5'-phosphoribosyl)-anthranilate (PRA). This is Anthranilate phosphoribosyltransferase from Prochlorococcus marinus (strain MIT 9312).